Here is a 530-residue protein sequence, read N- to C-terminus: Ataxin-10 homolog (530 aa).

It belongs to the ataxin-10 family.

It is found in the cytoplasm. Functionally, may play a role in the regulation of cytokinesis. The protein is Ataxin-10 homolog (CTR86) of Candida glabrata (strain ATCC 2001 / BCRC 20586 / JCM 3761 / NBRC 0622 / NRRL Y-65 / CBS 138) (Yeast).